Here is a 361-residue protein sequence, read N- to C-terminus: G kinase-anchoring protein 1-A (361 aa).

2 disordered regions span residues 22–111 and 140–183; these read DSSS…EDWQ and FEES…KDFQ. A compositionally biased stretch (low complexity) spans 35-48; it reads AHSSGKAHSGSAAR. The stretch at 51–79 forms a coiled coil; that stretch reads NKGNEKKKEKRRKKKEQQQSEANELRNLA. The span at 158-168 shows a compositional bias: basic residues; it reads KVNKKDKRKNN. Coiled coils occupy residues 246–296 and 326–346; these read KDGR…QEGE and AALE…VKYQ.

Belongs to the GKAP1 family.

It localises to the golgi apparatus. May play a role in the regulation of insulin-dependent IRS1 tyrosine phosphorylation in adipocytes. This Xenopus laevis (African clawed frog) protein is G kinase-anchoring protein 1-A (gkap1-a).